A 218-amino-acid chain; its full sequence is Probable cutinase 3 (218 aa).

The signal sequence occupies residues 1 to 17; that stretch reads MSLRSVLVAALAALAVA. 2 disulfides stabilise this stretch: Cys-41–Cys-120 and Cys-67–Cys-81. Ser-131 functions as the Nucleophile in the catalytic mechanism. Cys-182 and Cys-189 are oxidised to a cystine. Residue Asp-186 is part of the active site. The Proton donor/acceptor role is filled by His-199.

This sequence belongs to the cutinase family.

The protein localises to the secreted. The catalysed reaction is cutin + H2O = cutin monomers.. Functionally, catalyzes the hydrolysis of complex carboxylic polyesters found in the cell wall of plants. Degrades cutin, a macromolecule that forms the structure of the plant cuticle. This Aspergillus terreus (strain NIH 2624 / FGSC A1156) protein is Probable cutinase 3.